A 232-amino-acid polypeptide reads, in one-letter code: Myb-related protein 308 (232 aa).

HTH myb-type domains lie at 9 to 61 (KAHT…INYL) and 62 to 116 (RPDL…RRKL). DNA-binding regions (H-T-H motif) lie at residues 37–61 (WRSLPKAAGLLRCGKSCRLRWINYL) and 89–112 (WSLIAGRLPGRTDNEIKNYWNTHI).

Expressed in roots, stems, leaves, seed pods and flowers.

Its subcellular location is the nucleus. In terms of biological role, transcription factor. The polypeptide is Myb-related protein 308 (Antirrhinum majus (Garden snapdragon)).